Consider the following 538-residue polypeptide: Putative cysteine ligase BshC (538 aa).

Positions 462–533 (LDHLEKRLLK…DPLESNFKIL (72 aa)) form a coiled coil.

Belongs to the BshC family.

This chain is Putative cysteine ligase BshC, found in Christiangramia forsetii (strain DSM 17595 / CGMCC 1.15422 / KT0803) (Gramella forsetii).